The sequence spans 377 residues: MGIKGLSQVIADNCPSAVRHNDIKNYFGRKVAIDASMSLYQFLIQVRGQDGQQLMNDQGETTSHLMGMFYRTLRMVDNGLKPCYVFDGKPPTLKSGELAKRASRQQKAREEREEAKEVGTAEMVDKFAKRTVRVTRQHNDEAKKLLELMGIPYVNAPCEAEAQCAALARAGKVYAAASEDMDTMCFQAPILLRHLTFSEQRKEPISEYSFEKTIEGLNFTIEQFVDLCILLGCDYCDPIRGVGPARAVELIRQHGNLDNFVKDADKKKFPIPEDWPYQDARRLFLEAEVQEAKDIELKWRAPDEQGIIKFLVEEKGFNEDRVRVGINRLVKASKTIPQGRLDSFFKVLPSTKKEKEKPKAAAKRKRDTKSSAPKKKR.

The segment at 1–105 (MGIKGLSQVI…GELAKRASRQ (105 aa)) is N-domain. Residue Asp34 coordinates Mg(2+). Residues Arg47 and Arg71 each contribute to the DNA site. Asp87 is a binding site for Mg(2+). The segment at 96–115 (GELAKRASRQQKAREEREEA) is disordered. Residues 123-254 (MVDKFAKRTV…ARAVELIRQH (132 aa)) are I-domain. Residues Glu159, Glu161, Asp180, and Asp182 each coordinate Mg(2+). Glu159 provides a ligand contact to DNA. 2 residues coordinate DNA: Gly232 and Asp234. Asp234 contributes to the Mg(2+) binding site. The segment at 337 to 345 (PQGRLDSFF) is interaction with PCNA. Positions 350–377 (STKKEKEKPKAAAKRKRDTKSSAPKKKR) are disordered. Residues 360 to 377 (AAAKRKRDTKSSAPKKKR) show a composition bias toward basic residues.

This sequence belongs to the XPG/RAD2 endonuclease family. FEN1 subfamily. As to quaternary structure, interacts with PCNA. Three molecules of rad2 bind to one PCNA trimer with each molecule binding to one PCNA monomer. PCNA stimulates the nuclease activity without altering cleavage specificity. Mg(2+) serves as cofactor. In terms of processing, phosphorylated. Phosphorylation upon DNA damage induces relocalization to the nuclear plasma.

It is found in the nucleus. The protein localises to the nucleolus. The protein resides in the nucleoplasm. It localises to the mitochondrion. Its function is as follows. Structure-specific nuclease with 5'-flap endonuclease and 5'-3' exonuclease activities involved in DNA replication and repair. During DNA replication, cleaves the 5'-overhanging flap structure that is generated by displacement synthesis when DNA polymerase encounters the 5'-end of a downstream Okazaki fragment. It enters the flap from the 5'-end and then tracks to cleave the flap base, leaving a nick for ligation. Also involved in the long patch base excision repair (LP-BER) pathway, by cleaving within the apurinic/apyrimidinic (AP) site-terminated flap. Acts as a genome stabilization factor that prevents flaps from equilibrating into structures that lead to duplications and deletions. Also possesses 5'-3' exonuclease activity on nicked or gapped double-stranded DNA, and exhibits RNase H activity. Also involved in replication and repair of rDNA and in repairing mitochondrial DNA. This is Flap endonuclease 1 from Schizosaccharomyces japonicus (strain yFS275 / FY16936) (Fission yeast).